Consider the following 119-residue polypeptide: UPF0102 protein Nther_1376 (119 aa).

It belongs to the UPF0102 family.

The sequence is that of UPF0102 protein Nther_1376 from Natranaerobius thermophilus (strain ATCC BAA-1301 / DSM 18059 / JW/NM-WN-LF).